The following is a 539-amino-acid chain: 3-methylmercaptopropionyl-CoA ligase (539 aa).

Thr185 contacts Mg(2+). ATP contacts are provided by His231, Gly303, His324, Ala325, and Ser329. Glu330 provides a ligand contact to Mg(2+). Gln359, Asp417, Arg432, and Lys523 together coordinate ATP.

It belongs to the ATP-dependent AMP-binding enzyme family. Homodimer. It depends on Mg(2+) as a cofactor.

The enzyme catalyses 3-(methylsulfanyl)propanoate + ATP + CoA = 3-(methylsulfanyl)propanoyl-CoA + AMP + diphosphate. It participates in lipid metabolism; fatty acid metabolism. Activated by LiCl and NH(4)Cl. Inhibited by dimethylsulfoniopropionate (DMSP). MMPA concentrations above 2 mM relieve the DMSP inhibition and 80% of activity is regained at an MMPA concentration of 8 mM. Involved in the assimilation of dimethylsulphoniopropionate (DMSP), an important compound in the fixation of carbon in marine phytoplankton. Catalyzes the ATP-dependent ligation of methylmercaptopropionate (MMPA) and CoA to yield methylmercaptopropionate-CoA (MMPA-CoA). It is also active with short-chain-fatty-acid (carboxylic acids up to six carbons in length). This is 3-methylmercaptopropionyl-CoA ligase from Ruegeria pomeroyi (strain ATCC 700808 / DSM 15171 / DSS-3) (Silicibacter pomeroyi).